A 155-amino-acid polypeptide reads, in one-letter code: Large ribosomal subunit protein uL22c (155 aa).

It belongs to the universal ribosomal protein uL22 family. In terms of assembly, part of the 50S ribosomal subunit.

The protein localises to the plastid. It is found in the chloroplast. In terms of biological role, this protein binds specifically to 23S rRNA. Functionally, the globular domain of the protein is located near the polypeptide exit tunnel on the outside of the subunit, while an extended beta-hairpin is found that lines the wall of the exit tunnel in the center of the 70S ribosome. The protein is Large ribosomal subunit protein uL22c (rpl22) of Solanum tuberosum (Potato).